The sequence spans 177 residues: Large ribosomal subunit protein uL6 (177 aa).

Belongs to the universal ribosomal protein uL6 family. As to quaternary structure, part of the 50S ribosomal subunit.

This protein binds to the 23S rRNA, and is important in its secondary structure. It is located near the subunit interface in the base of the L7/L12 stalk, and near the tRNA binding site of the peptidyltransferase center. The sequence is that of Large ribosomal subunit protein uL6 from Cupriavidus metallidurans (strain ATCC 43123 / DSM 2839 / NBRC 102507 / CH34) (Ralstonia metallidurans).